Here is a 153-residue protein sequence, read N- to C-terminus: Ribonuclease 2 (153 aa).

The protein belongs to the BetVI family.

The protein resides in the cytoplasm. Catalyzes the two-stage endonucleolytic cleavage to 3'-phosphomononucleotides and 3'-phosphooligonucleotides with 2',3'-cyclic phosphate intermediates. In Panax ginseng (Korean ginseng), this protein is Ribonuclease 2.